Reading from the N-terminus, the 281-residue chain is Phosphoglycerate mutase-like protein AT74H (281 aa).

The Tele-phosphohistidine intermediate role is filled by histidine 17. Glutamate 109 acts as the Proton donor/acceptor in catalysis.

Belongs to the phosphoglycerate mutase family.

Functionally, may play a role in carbohydrates metabolism. The polypeptide is Phosphoglycerate mutase-like protein AT74H (Arabidopsis thaliana (Mouse-ear cress)).